Reading from the N-terminus, the 271-residue chain is Formamidopyrimidine-DNA glycosylase (271 aa).

Pro-2 (schiff-base intermediate with DNA) is an active-site residue. Glu-3 functions as the Proton donor in the catalytic mechanism. Lys-58 acts as the Proton donor; for beta-elimination activity in catalysis. DNA contacts are provided by His-91, Arg-110, and Arg-152. The segment at 237–271 (WVYGRTGQPCRKCGALVSKTRQGQRSSFFCAQCQK) adopts an FPG-type zinc-finger fold. Arg-261 functions as the Proton donor; for delta-elimination activity in the catalytic mechanism.

Belongs to the FPG family. In terms of assembly, monomer. The cofactor is Zn(2+).

The catalysed reaction is Hydrolysis of DNA containing ring-opened 7-methylguanine residues, releasing 2,6-diamino-4-hydroxy-5-(N-methyl)formamidopyrimidine.. It catalyses the reaction 2'-deoxyribonucleotide-(2'-deoxyribose 5'-phosphate)-2'-deoxyribonucleotide-DNA = a 3'-end 2'-deoxyribonucleotide-(2,3-dehydro-2,3-deoxyribose 5'-phosphate)-DNA + a 5'-end 5'-phospho-2'-deoxyribonucleoside-DNA + H(+). Functionally, involved in base excision repair of DNA damaged by oxidation or by mutagenic agents. Acts as a DNA glycosylase that recognizes and removes damaged bases. Has a preference for oxidized purines, such as 7,8-dihydro-8-oxoguanine (8-oxoG). Has AP (apurinic/apyrimidinic) lyase activity and introduces nicks in the DNA strand. Cleaves the DNA backbone by beta-delta elimination to generate a single-strand break at the site of the removed base with both 3'- and 5'-phosphates. This chain is Formamidopyrimidine-DNA glycosylase, found in Nitrosomonas eutropha (strain DSM 101675 / C91 / Nm57).